The sequence spans 126 residues: Fluoride-specific ion channel FluC 3 (126 aa).

4 consecutive transmembrane segments (helical) span residues methionine 7–isoleucine 27, leucine 37–phenylalanine 57, leucine 68–methionine 87, and alanine 101–glycine 121. Positions 79 and 82 each coordinate Na(+).

The protein belongs to the fluoride channel Fluc/FEX (TC 1.A.43) family.

The protein localises to the cell inner membrane. The catalysed reaction is fluoride(in) = fluoride(out). Na(+) is not transported, but it plays an essential structural role and its presence is essential for fluoride channel function. Its function is as follows. Fluoride-specific ion channel. Important for reducing fluoride concentration in the cell, thus reducing its toxicity. This Yersinia pestis protein is Fluoride-specific ion channel FluC 3.